Here is a 206-residue protein sequence, read N- to C-terminus: Small ribosomal subunit protein uS4 (206 aa).

One can recognise an S4 RNA-binding domain in the interval 98–155; sequence TRLDNVVYRLGWALSRDQARQLVSHGKIAVNGKRVNIPSYNLKPGDVVELLDKDLIPV.

Belongs to the universal ribosomal protein uS4 family. In terms of assembly, part of the 30S ribosomal subunit. Contacts protein S5. The interaction surface between S4 and S5 is involved in control of translational fidelity.

Its function is as follows. One of the primary rRNA binding proteins, it binds directly to 16S rRNA where it nucleates assembly of the body of the 30S subunit. Functionally, with S5 and S12 plays an important role in translational accuracy. The sequence is that of Small ribosomal subunit protein uS4 from Dictyoglomus thermophilum (strain ATCC 35947 / DSM 3960 / H-6-12).